Reading from the N-terminus, the 104-residue chain is L-rhamnose mutarotase (104 aa).

Substrate is bound at residue tyrosine 18. Catalysis depends on histidine 22, which acts as the Proton donor. Residues tyrosine 41 and 76–77 (WW) contribute to the substrate site.

The protein belongs to the rhamnose mutarotase family. In terms of assembly, homodimer.

It is found in the cytoplasm. It carries out the reaction alpha-L-rhamnose = beta-L-rhamnose. Its pathway is carbohydrate metabolism; L-rhamnose metabolism. Involved in the anomeric conversion of L-rhamnose. The polypeptide is L-rhamnose mutarotase (Pectobacterium carotovorum subsp. carotovorum (strain PC1)).